The primary structure comprises 394 residues: Protein TsgA homolog (394 aa).

A run of 12 helical transmembrane segments spans residues 11-31 (WISFFSYALTGALVIVTGMVM), 51-71 (FLNAGILISIFLNAWLMEIVP), 78-98 (FGFVLMVAAVAGLMVSHSIAL), 101-121 (VSMFVLGLVSGITMSIGTFLI), 134-154 (LLFTDSFFSMAGMIFPMVAAV), 162-182 (WYWVYACIGLVYVAIFVLTFG), 206-226 (IGVLFLSVAALCYILGQLGFI), 250-270 (FWMSYMFGMWAFSFILRFFDL), 273-293 (ILTVLAGLATVLMYLFINGAP), 297-317 (AWFILTLGFFSSAIYTSIITL), 332-352 (FVLTCGTIGTMLTFVVTGPIV), and 361-381 (LQTANGLYAVVFVMCLILGFV).

It belongs to the major facilitator superfamily. TsgA family.

Its subcellular location is the cell inner membrane. The polypeptide is Protein TsgA homolog (Enterobacter sp. (strain 638)).